We begin with the raw amino-acid sequence, 225 residues long: MADHMMAMNHSRFQDGTNGLHHPAHRMGMGQFPSPHHHQHTFNSLMGEHMHYVPGNMNSNNSIRHAMVTGNVNGGHPNGSIAPAARFNNSQFMGPPVTNQGAQLTASMQLQKLNNQYFTHQPYPHNHYIPDLHPTNHPLNGTNQHFKECNPKHSTGLPPSVSHVPAAILPPGVIDTDFIDEEVLMSLVIEMGLDRIKELPELWLGQNEFDFMTDFVCKQPNRVSC.

This sequence belongs to the CITED family.

Its subcellular location is the nucleus. In terms of biological role, transcriptional coactivator or corepressor of the p300/CBP-mediated transcription complex. May be involved in sex determination, early gonad development, left-right patterning during embryogenesis and differentiation of the adrenal cortex. In Xenopus laevis (African clawed frog), this protein is Cbp/p300-interacting transactivator 2 (cited2).